We begin with the raw amino-acid sequence, 388 residues long: Phosphoglycerate kinase (388 aa).

Substrate-binding positions include 24 to 26 (DLN), R37, 56 to 59 (RGGR), R117, and R165. Positions 26–136 (NVPLDSDGEQ…RRPRNVQGRR (111 aa)) are disordered. The span at 34 to 55 (EQGRITDPGPDHRVGADVERTG) shows a compositional bias: basic and acidic residues. Residues 102–136 (GGHRRPGPRRGVDRRRRPAAGKHPVRRPRNVQGRR) show a composition bias toward basic residues. ATP-binding positions include K215, G303, E334, and 363–366 (GGDS).

This sequence belongs to the phosphoglycerate kinase family. In terms of assembly, monomer.

The protein localises to the cytoplasm. The enzyme catalyses (2R)-3-phosphoglycerate + ATP = (2R)-3-phospho-glyceroyl phosphate + ADP. It participates in carbohydrate degradation; glycolysis; pyruvate from D-glyceraldehyde 3-phosphate: step 2/5. In Mycobacterium avium, this protein is Phosphoglycerate kinase (pgk).